A 118-amino-acid chain; its full sequence is Large ribosomal subunit protein bL20 (118 aa).

It belongs to the bacterial ribosomal protein bL20 family.

Functionally, binds directly to 23S ribosomal RNA and is necessary for the in vitro assembly process of the 50S ribosomal subunit. It is not involved in the protein synthesizing functions of that subunit. In Staphylococcus saprophyticus subsp. saprophyticus (strain ATCC 15305 / DSM 20229 / NCIMB 8711 / NCTC 7292 / S-41), this protein is Large ribosomal subunit protein bL20.